The sequence spans 857 residues: Cadherin-related family member 1a (857 aa).

The signal sequence occupies residues 1 to 25 (MKNAREIQFSSFLLLAHFCFVGAQS). Residues 26–709 (DYAPYFYDNG…RENPMHFLGL (684 aa)) lie on the Extracellular side of the membrane. 6 consecutive Cadherin domains span residues 40-139 (NGNM…RPQF), 140-252 (QNMP…PPIF), 253-359 (IGTP…PPTF), 365-478 (PQNV…APKF), 479-582 (TSDF…PPAF), and 574-693 (DLND…GPLT). A helical transmembrane segment spans residues 710–730 (ISGVILILVFVTVIISTVIFV). At 731 to 857 (RRNKANRILP…LEQKNMANRY (127 aa)) the chain is on the cytoplasmic side. A disordered region spans residues 746–765 (RKKRKPQKQDDFQEPFREEQ). Positions 752-765 (QKQDDFQEPFREEQ) are enriched in basic and acidic residues.

In terms of tissue distribution, expressed in photoreceptor cells of the outer nuclear layer of the retina and in the pinal gland.

Its subcellular location is the membrane. Functionally, potential calcium-dependent cell-adhesion protein. Plays a role in the organization of retinal cell layers and Muller glia morphology. In Danio rerio (Zebrafish), this protein is Cadherin-related family member 1a.